The primary structure comprises 210 residues: Proteasome subunit beta (210 aa).

The propeptide at 1 to 9 (MDNDKHLKG) is removed in mature form; by autocatalysis. Thr10 functions as the Nucleophile in the catalytic mechanism.

Belongs to the peptidase T1B family. The 20S proteasome core is composed of 14 alpha and 14 beta subunits that assemble into four stacked heptameric rings, resulting in a barrel-shaped structure. The two inner rings, each composed of seven catalytic beta subunits, are sandwiched by two outer rings, each composed of seven alpha subunits. The catalytic chamber with the active sites is on the inside of the barrel. Has a gated structure, the ends of the cylinder being occluded by the N-termini of the alpha-subunits. Is capped at one or both ends by the proteasome regulatory ATPase, PAN.

The protein resides in the cytoplasm. It carries out the reaction Cleavage of peptide bonds with very broad specificity.. The formation of the proteasomal ATPase PAN-20S proteasome complex, via the docking of the C-termini of PAN into the intersubunit pockets in the alpha-rings, triggers opening of the gate for substrate entry. Interconversion between the open-gate and close-gate conformations leads to a dynamic regulation of the 20S proteasome proteolysis activity. Functionally, component of the proteasome core, a large protease complex with broad specificity involved in protein degradation. This Methanococcoides burtonii (strain DSM 6242 / NBRC 107633 / OCM 468 / ACE-M) protein is Proteasome subunit beta.